Reading from the N-terminus, the 244-residue chain is Type I iodothyronine deiodinase (244 aa).

The Extracellular portion of the chain corresponds to 1 to 12 (MGLSQLGLWLRR). Residues 13 to 33 (LWVLFQVALQVAVGKVFLILF) traverse the membrane as a helical; Signal-anchor for type III membrane protein segment. The Cytoplasmic portion of the chain corresponds to 34–244 (PSRVKQHIVA…VRAVLEKLHS (211 aa)). The active site involves U121. A non-standard amino acid (selenocysteine) is located at residue U121.

It belongs to the iodothyronine deiodinase family. As to quaternary structure, predominantly monomer. Can form homodimers but homodimerization is not essential for enzyme activity.

The protein resides in the cell membrane. The protein localises to the endoplasmic reticulum membrane. It is found in the basolateral cell membrane. The enzyme catalyses 3,3',5-triiodo-L-thyronine + iodide + A + H(+) = L-thyroxine + AH2. It carries out the reaction 3,3',5'-triiodo-L-thyronine + iodide + A + H(+) = L-thyroxine + AH2. The catalysed reaction is 3,3'-diiodo-L-thyronine + iodide + A + H(+) = 3,3',5'-triiodo-L-thyronine + AH2. It catalyses the reaction 3,3'-diiodo-L-thyronine + iodide + A + H(+) = 3,3',5-triiodo-L-thyronine + AH2. The enzyme catalyses 3'-iodo-L-thyronine + iodide + A + H(+) = 3',5'-diiodo-L-thyronine + AH2. It carries out the reaction 3-iodo-L-thyronine + iodide + A + H(+) = 3,5-diiodo-L-thyronine + AH2. The catalysed reaction is 3-iodo-L-thyronine + iodide + A + H(+) = 3,3'-diiodo-L-thyronine + AH2. It catalyses the reaction 3,3'-diiodothyronamine + iodide + A + H(+) = 3,3',5'-triiodothyronamine + AH2. The enzyme catalyses 3'-iodothyronamine + iodide + A + H(+) = 3',5'-diiodothyronamine + AH2. It carries out the reaction 3-iodothyronamine + iodide + A + H(+) = 3,3'-diiodothyronamine + AH2. The catalysed reaction is 3,3'-diiodothyronamine + iodide + A + H(+) = 3,3',5-triiodothyronamine + AH2. It catalyses the reaction 3-iodothyronamine + iodide + A + H(+) = 3,5-diiodothyronamine + AH2. The enzyme catalyses 3,3'-diiodo-L-thyronine sulfate + iodide + A + H(+) = 3,3',5'-triiodo-L-thyronine sulfate + AH2. It carries out the reaction 3,3',5'-triiodo-L-thyronine sulfate + iodide + A + H(+) = L-thyroxine sulfate + AH2. The catalysed reaction is 3,3'-diiodo-L-thyronine sulfate + iodide + A + H(+) = 3,3',5-triiodo-L-thyronine sulfate + AH2. In terms of biological role, plays a crucial role in the metabolism of thyroid hormones (TH) and has specific roles in TH activation and inactivation by deiodination. Catalyzes the deiodination of L-thyroxine (T4) to 3,5,3'-triiodothyronine (T3) and 3',5'-diiodothyronine (3',5'-T2) to 3'-monoiodothyronine (3'-T1) via outer-ring deiodination (ORD). Catalyzes the deiodination of T4 to 3,3',5'-triiodothyronine (rT3), T3 to 3,3'-diiodothyronine (3,3'-T2), 3,5-diiodothyronine (3,5-T2) to 3-monoiodothyronine (3-T1) and 3,3'-T2 to 3-T1 via inner-ring deiodination (IRD). Catalyzes the deiodination of rT3 to 3,3'-T2 via ORD. Catalyzes the phenolic ring deiodinations of 3,3',5'-triiodothyronamine, 3',5'-diiodothyronamine and 3,3'-diiodothyronamine as well as tyrosyl ring deiodinations of 3,5,3'-triiodothyronamine and 3,5-diiodothyronamine. Catalyzes the deiodination of L-thyroxine sulfate and 3,3',5-triiodo-L-thyronine sulfate via IRD and of 3,3',5'-triiodo-L-thyronine sulfate via ORD. The polypeptide is Type I iodothyronine deiodinase (DIO1) (Felis catus (Cat)).